The sequence spans 23 residues: Potassium channel toxin kappa-KTx 1.2 (23 aa).

Disulfide bonds link Cys4/Cys22 and Cys8/Cys18. Residue Cys22 is modified to Cysteine amide.

The protein belongs to the short scorpion toxin superfamily. Potassium channel inhibitor kappa-KTx family. Kappa-KTx 1 subfamily. In terms of processing, the two disulfide isomers globular (C1-C3, C2-C4) and beads (C1-C2, C3-C4) do not show activity on Kv10.1/KCNH1/EAG1. As to expression, expressed by the venom gland.

It is found in the secreted. Its function is as follows. Shows weak blocking activity on voltage-gated potassium channels Kv10.1/KCNH1/EAG1 (IC(50)=26 uM), Kv1.2/KCNA2 (Kd=150 uM), Kv1.3/KCNA3 (Kd=40 uM), Kv1.6/KCNA3 (16.6% inhibition at 40 uM toxin). The block is dose-dependent, voltage-independent, and reversible. Also shows a weak inhibitory activity on the plant pathogen F.culmorum growth (IC(50)=18.8-37.7 uM). The chain is Potassium channel toxin kappa-KTx 1.2 from Chersonesometrus fulvipes (Indian black scorpion).